Here is a 543-residue protein sequence, read N- to C-terminus: Glucose-6-phosphate isomerase (543 aa).

The active-site Proton donor is the E353. Catalysis depends on residues H384 and K504.

The protein belongs to the GPI family.

It is found in the cytoplasm. The enzyme catalyses alpha-D-glucose 6-phosphate = beta-D-fructose 6-phosphate. It participates in carbohydrate biosynthesis; gluconeogenesis. Its pathway is carbohydrate degradation; glycolysis; D-glyceraldehyde 3-phosphate and glycerone phosphate from D-glucose: step 2/4. Functionally, catalyzes the reversible isomerization of glucose-6-phosphate to fructose-6-phosphate. This Roseiflexus sp. (strain RS-1) protein is Glucose-6-phosphate isomerase.